Consider the following 378-residue polypeptide: POU domain, class 3, transcription factor 2 (378 aa).

3 disordered regions span residues 1-28 (MATT…SMQQ), 86-118 (SPRD…HDSR), and 151-205 (LIPG…TPTS). Residues 164–181 (MRDAHEDHHSPHLSDHGH) are compositionally biased toward basic and acidic residues. One can recognise a POU-specific domain in the interval 200–274 (EDTPTSDDLE…LLNKWLEEAD (75 aa)). Phosphoserine is present on Ser-279. The segment at residues 292–351 (KRKKRTSIEVSVKGALESHFLKCPKPAASEITSLADSLQLEKEVVRVWFCNRRQKEKRMT) is a DNA-binding region (homeobox). Residues 347–378 (EKRMTPPGGPLPGTEDVYGDTPPHHGVQTPVQ) form a disordered region.

This sequence belongs to the POU transcription factor family. Class-3 subfamily. Predominantly expressed in the central nervous system, with strong expression in the cerebellum.

The protein localises to the nucleus. Transcription factor that may play important roles in patterning the embryonic brain. The protein is POU domain, class 3, transcription factor 2 (pou3f2) of Danio rerio (Zebrafish).